We begin with the raw amino-acid sequence, 260 residues long: MQLSRRAEIGNPSSRNLSPRINEKVELLGQALEHARRAGMSSSLMEYGRQVARHLSANVQPDEKILSLDIRNLPLLAASYNRRYPDLDLRHMDSPARFFDALNDRSSDGAWRAVVRLADGEQHHVAADVRTRAGAAPTIIVMEGANFYTFVASYFKLRGDSFRQLGTQAKWAFIEVGAQKSAADCVMFGVQFALAAYRELPTFDAWHDNLHHHGTIAHEGDYSSDYMPRRHAGICANKPFSWGEVPPSDLLQALSLQQCN.

Residues His123 and Glu143 contribute to the active site. Residue His123 coordinates CoA. 180–181 (KS) provides a ligand contact to CoA. Cys185 is an active-site residue.

This sequence belongs to the acetyltransferase YopJ family.

The catalysed reaction is L-threonyl-[protein] + acetyl-CoA = O-acetyl-L-threonyl-[protein] + CoA. It catalyses the reaction L-seryl-[protein] + acetyl-CoA = O-acetyl-L-seryl-[protein] + CoA. Its function is as follows. Serine/threonine-protein acetyltransferase translocated into infected cells, which mediates acetylation of serine and threonine residues of host target proteins. This chain is Serine/threonine-protein acetyltransferase NGR_a02610, found in Sinorhizobium fredii (strain NBRC 101917 / NGR234).